Reading from the N-terminus, the 522-residue chain is 2-isopropylmalate synthase (522 aa).

The Pyruvate carboxyltransferase domain maps to 5–267 (VIIFDTTLRD…ETGINAKEIH (263 aa)). Mn(2+) contacts are provided by Asp-14, His-202, His-204, and Asn-238. The regulatory domain stretch occupies residues 392-522 (QLQQLVVQSD…MQKNRELGGV (131 aa)).

Belongs to the alpha-IPM synthase/homocitrate synthase family. LeuA type 1 subfamily. Homodimer. Requires Mn(2+) as cofactor.

The protein localises to the cytoplasm. The catalysed reaction is 3-methyl-2-oxobutanoate + acetyl-CoA + H2O = (2S)-2-isopropylmalate + CoA + H(+). It participates in amino-acid biosynthesis; L-leucine biosynthesis; L-leucine from 3-methyl-2-oxobutanoate: step 1/4. Its function is as follows. Catalyzes the condensation of the acetyl group of acetyl-CoA with 3-methyl-2-oxobutanoate (2-ketoisovalerate) to form 3-carboxy-3-hydroxy-4-methylpentanoate (2-isopropylmalate). The protein is 2-isopropylmalate synthase of Shewanella baltica (strain OS223).